A 410-amino-acid chain; its full sequence is LL-diaminopimelate aminotransferase (410 aa).

Substrate-binding residues include Y15 and G42. Pyridoxal 5'-phosphate-binding positions include Y72, 108-109, Y132, N187, Y218, and 246-248; these read SK and SFS. Positions 109, 132, and 187 each coordinate substrate. Residue K249 is modified to N6-(pyridoxal phosphate)lysine. Pyridoxal 5'-phosphate-binding residues include R257 and N292. Residues N292 and R388 each coordinate substrate.

This sequence belongs to the class-I pyridoxal-phosphate-dependent aminotransferase family. LL-diaminopimelate aminotransferase subfamily. Homodimer. Pyridoxal 5'-phosphate serves as cofactor.

The catalysed reaction is (2S,6S)-2,6-diaminopimelate + 2-oxoglutarate = (S)-2,3,4,5-tetrahydrodipicolinate + L-glutamate + H2O + H(+). The protein operates within amino-acid biosynthesis; L-lysine biosynthesis via DAP pathway; LL-2,6-diaminopimelate from (S)-tetrahydrodipicolinate (aminotransferase route): step 1/1. In terms of biological role, involved in the synthesis of meso-diaminopimelate (m-DAP or DL-DAP), required for both lysine and peptidoglycan biosynthesis. Catalyzes the direct conversion of tetrahydrodipicolinate to LL-diaminopimelate. The protein is LL-diaminopimelate aminotransferase of Geobacter metallireducens (strain ATCC 53774 / DSM 7210 / GS-15).